The following is a 150-amino-acid chain: UPF0756 membrane protein HI_1074 (150 aa).

The next 4 membrane-spanning stretches (helical) occupy residues 1 to 21, 52 to 72, 81 to 101, and 123 to 143; these read MTLQ…LGVL, YGVK…LVSG, GFLS…AWLA, and IIGV…AGIL.

It belongs to the UPF0756 family.

Its subcellular location is the cell membrane. This Haemophilus influenzae (strain ATCC 51907 / DSM 11121 / KW20 / Rd) protein is UPF0756 membrane protein HI_1074.